The following is a 507-amino-acid chain: Tyrosine protein-kinase src-2 (507 aa).

A compositionally biased stretch (basic and acidic residues) spans 1 to 10; it reads MGSCIGKEDP. The segment at 1-52 is disordered; that stretch reads MGSCIGKEDPPPGATSPVHTSSTLGRESLPSHPRIPSIGPIAASSSGNTIDK. A lipid anchor (N-myristoyl glycine) is attached at Gly-2. A compositionally biased stretch (low complexity) spans 35–47; it reads IPSIGPIAASSSG. The 62-residue stretch at 57–118 folds into the SH3 domain; the sequence is SQSANFVALF…PSNYVAREKS (62 aa). Positions 124-216 constitute an SH2 domain; that stretch reads WYFGKMRRID…GLCVNLGAPC (93 aa). The 255-residue stretch at 240–494 folds into the Protein kinase domain; sequence VRLIRQIGAG…LQWKLEDLFN (255 aa). ATP-binding positions include 246–254 and Lys-268; that span reads IGAGQFGEV. The Proton acceptor role is filled by Asp-358. The residue at position 500 (Tyr-500) is a Phosphotyrosine.

This sequence belongs to the protein kinase superfamily. Tyr protein kinase family. SRC subfamily. Requires Mg(2+) as cofactor. It depends on Mn(2+) as a cofactor. In terms of processing, may be phosphorylated on Tyr-500 by csk-1. In terms of tissue distribution, expressed in vulva, cells around anus and pharyngeal muscles.

It carries out the reaction L-tyrosyl-[protein] + ATP = O-phospho-L-tyrosyl-[protein] + ADP + H(+). Its activity is regulated as follows. May be inhibited by csk-1-mediated phosphorylation at Tyr-500. In terms of biological role, non-receptor tyrosine-protein kinase which may play a role in larval and pharynx development. Unlike src-1, does not play a role in embryonic development. The chain is Tyrosine protein-kinase src-2 from Caenorhabditis elegans.